The primary structure comprises 188 residues: Probable manganese efflux pump MntP (188 aa).

The next 5 membrane-spanning stretches (helical) occupy residues 3–23, 66–86, 106–128, 143–163, and 168–188; these read ITAT…ASIG, LEWN…RMII, WLLV…GLAF, ATLI…SIIG, and ILGG…HFHG.

The protein belongs to the MntP (TC 9.B.29) family.

It is found in the cell inner membrane. Functionally, probably functions as a manganese efflux pump. The chain is Probable manganese efflux pump MntP from Shigella flexneri serotype 5b (strain 8401).